We begin with the raw amino-acid sequence, 170 residues long: Lipoprotein signal peptidase (170 aa).

The next 3 helical transmembrane spans lie at 12 to 32 (WYWVVVLVFLADQLSKQWVLS), 67 to 87 (WQRWLFTFVAVGFSVLLSVWL), and 94 to 113 (MWRLNLAYTLVIGGALGNLI). Catalysis depends on residues D123 and D141. Residues 139–159 (IADSAICVGAGLIILDSFVAG) form a helical membrane-spanning segment.

This sequence belongs to the peptidase A8 family.

The protein resides in the cell inner membrane. The enzyme catalyses Release of signal peptides from bacterial membrane prolipoproteins. Hydrolyzes -Xaa-Yaa-Zaa-|-(S,diacylglyceryl)Cys-, in which Xaa is hydrophobic (preferably Leu), and Yaa (Ala or Ser) and Zaa (Gly or Ala) have small, neutral side chains.. The protein operates within protein modification; lipoprotein biosynthesis (signal peptide cleavage). Its function is as follows. This protein specifically catalyzes the removal of signal peptides from prolipoproteins. The sequence is that of Lipoprotein signal peptidase from Shewanella pealeana (strain ATCC 700345 / ANG-SQ1).